A 302-amino-acid polypeptide reads, in one-letter code: Hydra actinoporin-like toxin 4 (302 aa).

The N-terminal stretch at M1–G17 is a signal peptide. Positions K22–K93 are disordered. Residues K60–P75 are compositionally biased toward low complexity. The segment covering Q76–P86 has biased composition (pro residues). The short motif at K274–G276 is the Cell attachment site element.

This sequence belongs to the actinoporin family. HALT subfamily. Octamer or nonamer in membranes. Monomer in the soluble state. In vitro, interacts with folate receptor alpha (of target organism).

The protein resides in the nematocyst. It is found in the secreted. It localises to the target cell membrane. Its function is as follows. Pore-forming protein that forms hydrophilic pores and causes cytolysis. Compared to equinatoxin-2 (AC P61914), it reveals lower cytolysis activity (5-12-fold difference, tested on erythrocytes), a larger pore size (probably 2-3 nm) and different affinity to membrane lipids (100-fold lower affinity to sphingomyelin). Binds to sulfatides. Shows cytolytic activity on HeLa cells, with a different potency than its paralogs (from most potent to less potent: HALT-4&gt;HALT-6~HALT-1&gt;HALT-3&gt;HALT-7&gt;HALT-2). This recombinant protein has the highest cytolytic activity compared to other rHALT proteins, probably due to its longer N-terminal sequence that may penetrate the lipid bilayer more effectively. Pore formation is a multi-step process that involves specific recognition of membrane lipid by a protein aromatic residues rich region, firm binding to the membrane (mainly driven by hydrophobic interactions) accompanied by the transfer of the N-terminal region to the lipid-water interface and finally pore formation after oligomerization of monomers. In vitro, binds to the folate receptor alpha (FOLR1), a GPI-anchored membrane protein that plays a major role in the uptake of folate/folic acid into cells via endocytosis, suggesting a possible involvement of this receptor in the mechanism of HALT-1-induced cell lysis. In vivo, does not cause visible paralysis in larvae of the blowfly Sarcophaga faculata, the most common arthropod prey of Hydra. This chain is Hydra actinoporin-like toxin 4, found in Hydra vulgaris (Hydra).